The chain runs to 116 residues: uncharacterized protein (116 aa).

This is an uncharacterized protein from Saccharomyces cerevisiae (strain ATCC 204508 / S288c) (Baker's yeast).